The primary structure comprises 545 residues: MPVDVGTLPPPAPREAVSAAAHLLASVDGDPWGRTSPTVYETARVHAWAPHLPGRDRRVTWLLDQQRAGGLWGDGPPAYQVLPTLAAVTALLAELDRHPEAGHSSLGGRLAAAVAAGLDTLHGLSHHDPLPDTAAVELLVPGLITEVNDRLDAIDPEAAHPALAPVPHGRRLTAVHGIPALPRHRLAERLARFARLPVKLHHCFEALAPVCPPGLVPARPDHLLGSSSAATAAWLATATAAPGAPGLDRLLRSTAARYGGLFPETARITVFERLWVLTTLHRAGLLATFEPLARRWVSALAAPGGVPGVPGFEPDADDTAVTLHLATELGVPYRPEVLDPFRTGDHFACYLGEDTGSVSTNAHVLLALGTWTRHHPDTADHGNTIRLLGRWLVERQHGDGHWDDKWHASPYYATAKVTAALSRHGGPEAADALRRAARWVRETRRTDGSWGIWGGTAEETAYAAQILLDAPEPPTDVLGCAHAHLTARADDDGPPPALWHDKTLFAPDAIVRAEVLSTLRRLDRRLPAPAPVPPGFDAARTGPAD.

Residues 315 to 320 (DADDTA) carry the DXDDTA motif motif. Positions 444–450 (RRTDGSW) match the RXXDGSW motif motif. The segment at 526–545 (LPAPAPVPPGFDAARTGPAD) is disordered.

It belongs to the terpene synthase family. The cofactor is Mg(2+).

The enzyme catalyses (2E,6E,10E)-geranylgeranyl diphosphate = (13E)-labda-7,13-dien-15-yl diphosphate. In terms of biological role, involved in the biosynthesis of the labdane-type bicyclic diterpene labda-7,13(16),14-triene. Catalyzes the conversion of geranylgeranyl diphosphate (GGDP) into labda-7,13(E)-dienyl diphosphate. The protein is Labda-7,13-dienyl diphosphate synthase of Streptomyces clavuligerus.